The following is a 39-amino-acid chain: Conotoxin ArMSGL-013 (39 aa).

A propeptide spanning residues 1–5 is cleaved from the precursor; the sequence is RRSLT. Intrachain disulfides connect Cys12-Cys24, Cys16-Cys33, and Cys23-Cys37. At Trp38 the chain carries Tryptophan amide.

This sequence belongs to the conotoxin O3 superfamily. Expressed by the venom duct.

It localises to the secreted. This is Conotoxin ArMSGL-013 from Conus arenatus (Sand-dusted cone).